Here is a 259-residue protein sequence, read N- to C-terminus: Putative carbamate hydrolase RutD (259 aa).

Belongs to the AB hydrolase superfamily. Hydrolase RutD family.

It carries out the reaction carbamate + 2 H(+) = NH4(+) + CO2. Involved in pyrimidine catabolism. May facilitate the hydrolysis of carbamate, a reaction that can also occur spontaneously. This Pseudomonas syringae pv. syringae (strain B728a) protein is Putative carbamate hydrolase RutD.